The primary structure comprises 198 residues: dTTP/UTP pyrophosphatase (198 aa).

Asp75 functions as the Proton acceptor in the catalytic mechanism.

It belongs to the Maf family. YhdE subfamily. The cofactor is a divalent metal cation.

Its subcellular location is the cytoplasm. The catalysed reaction is dTTP + H2O = dTMP + diphosphate + H(+). It catalyses the reaction UTP + H2O = UMP + diphosphate + H(+). Functionally, nucleoside triphosphate pyrophosphatase that hydrolyzes dTTP and UTP. May have a dual role in cell division arrest and in preventing the incorporation of modified nucleotides into cellular nucleic acids. The sequence is that of dTTP/UTP pyrophosphatase from Wolbachia sp. subsp. Drosophila simulans (strain wRi).